Here is an 81-residue protein sequence, read N- to C-terminus: EDLPHVDAATNPIAQSLHYIEDANASERNPVTKTELPGSEQFCHNCSFIQADSGAWRPCTLYPGYTVSEDGWCLSWAHKTA.

Positions 43, 46, 59, and 73 each coordinate [4Fe-4S] cluster.

The protein belongs to the high-potential iron-sulfur protein (HiPIP) family. Homodimer.

Functionally, specific class of high-redox-potential 4Fe-4S ferredoxins. Functions in anaerobic electron transport in most purple and in some other photosynthetic bacteria and in at least one genus (Paracoccus) of halophilic, denitrifying bacteria. The chain is High-potential iron-sulfur protein (hip) from Thiococcus pfennigii (Thiocapsa pfennigii).